The following is a 242-amino-acid chain: Uroporphyrinogen-III C-methyltransferase (242 aa).

S-adenosyl-L-homocysteine-binding positions include P12, 88-90 (GGD), 118-119 (TS), and M170.

It belongs to the precorrin methyltransferase family. In terms of assembly, homodimer.

It catalyses the reaction uroporphyrinogen III + 2 S-adenosyl-L-methionine = precorrin-2 + 2 S-adenosyl-L-homocysteine + H(+). It functions in the pathway cofactor biosynthesis; adenosylcobalamin biosynthesis; precorrin-2 from uroporphyrinogen III: step 1/1. In terms of biological role, catalyzes the two successive C-2 and C-7 methylation reactions involved in the conversion of uroporphyrinogen III to precorrin-2 via the intermediate formation of precorrin-1. It is a step in the biosynthesis of both cobalamin (vitamin B12) and coenzyme F430. The protein is Uroporphyrinogen-III C-methyltransferase (cobA) of Methanocaldococcus jannaschii (strain ATCC 43067 / DSM 2661 / JAL-1 / JCM 10045 / NBRC 100440) (Methanococcus jannaschii).